Reading from the N-terminus, the 270-residue chain is Checkpoint signal transducer rad25 (270 aa).

2 positions are modified to phosphoserine: Ser-234 and Ser-253. The interval 240–270 is disordered; that stretch reads QSAKEEAPAAAAASENEHPEPKESTTDTVKA. A compositionally biased stretch (basic and acidic residues) spans 254–270; it reads ENEHPEPKESTTDTVKA.

It belongs to the 14-3-3 family. As to quaternary structure, interacts with rad24. Interacts with byr2.

Its subcellular location is the cytoplasm. Its function is as follows. Acts in cell cycle and stress checkpoint signaling by sequestering signal transducers regulated by the checkpoints. Required for the DNA damage checkpoint that ensures that DNA damage is repaired before mitosis is attempted. Sequesters byr2 in the cytoplasm to prevent its translocation to the plasma membrane. The chain is Checkpoint signal transducer rad25 from Schizosaccharomyces pombe (strain 972 / ATCC 24843) (Fission yeast).